The primary structure comprises 216 residues: uncharacterized protein (216 aa).

The S-adenosyl-L-methionine site is built by Gly56 and Glu77.

This sequence belongs to the methyltransferase superfamily. YrrT family.

In terms of biological role, could be a S-adenosyl-L-methionine-dependent methyltransferase. This is an uncharacterized protein from Alkaliphilus oremlandii (strain OhILAs) (Clostridium oremlandii (strain OhILAs)).